Here is a 330-residue protein sequence, read N- to C-terminus: ADP-L-glycero-D-manno-heptose-6-epimerase (330 aa).

NADP(+) contacts are provided by residues 11–12 (FI), 32–33 (DD), Gln39, Gln54, 75–79 (QGACA), and Asn92. Tyr139 serves as the catalytic Proton acceptor. NADP(+) is bound at residue Lys143. Asn168 contacts substrate. Residues Val169 and Lys177 each coordinate NADP(+). The Proton acceptor role is filled by Lys177. Substrate is bound by residues Arg179, His186, 200-203 (FGEH), Arg213, and Tyr292.

It belongs to the NAD(P)-dependent epimerase/dehydratase family. HldD subfamily. In terms of assembly, homopentamer. Requires NADP(+) as cofactor.

The catalysed reaction is ADP-D-glycero-beta-D-manno-heptose = ADP-L-glycero-beta-D-manno-heptose. The protein operates within nucleotide-sugar biosynthesis; ADP-L-glycero-beta-D-manno-heptose biosynthesis; ADP-L-glycero-beta-D-manno-heptose from D-glycero-beta-D-manno-heptose 7-phosphate: step 4/4. Its pathway is bacterial outer membrane biogenesis; LPS core biosynthesis. Its function is as follows. Catalyzes the interconversion between ADP-D-glycero-beta-D-manno-heptose and ADP-L-glycero-beta-D-manno-heptose via an epimerization at carbon 6 of the heptose. This chain is ADP-L-glycero-D-manno-heptose-6-epimerase, found in Pseudomonas aeruginosa (strain ATCC 15692 / DSM 22644 / CIP 104116 / JCM 14847 / LMG 12228 / 1C / PRS 101 / PAO1).